A 63-amino-acid chain; its full sequence is Large ribosomal subunit protein uL29 (63 aa).

The protein belongs to the universal ribosomal protein uL29 family.

The sequence is that of Large ribosomal subunit protein uL29 from Sulfurovum sp. (strain NBC37-1).